A 159-amino-acid polypeptide reads, in one-letter code: Ribosomal RNA large subunit methyltransferase H (159 aa).

S-adenosyl-L-methionine-binding positions include G108 and 127–132; that span reads FGKLTM.

Belongs to the RNA methyltransferase RlmH family. As to quaternary structure, homodimer.

Its subcellular location is the cytoplasm. The enzyme catalyses pseudouridine(1915) in 23S rRNA + S-adenosyl-L-methionine = N(3)-methylpseudouridine(1915) in 23S rRNA + S-adenosyl-L-homocysteine + H(+). Its function is as follows. Specifically methylates the pseudouridine at position 1915 (m3Psi1915) in 23S rRNA. The protein is Ribosomal RNA large subunit methyltransferase H of Lactobacillus acidophilus (strain ATCC 700396 / NCK56 / N2 / NCFM).